Reading from the N-terminus, the 94-residue chain is MRLRSPYWLFVVLILALAGLQYRLWVGDGSLAQVRDLQKQIADQHGENERLLERNRILEAEVAELKKGTETVEERARHELGMVKDGETLYQLAK.

The Cytoplasmic segment spans residues 1–8 (MRLRSPYW). The chain crosses the membrane as a helical span at residues 9–26 (LFVVLILALAGLQYRLWV). Residues 27-94 (GDGSLAQVRD…DGETLYQLAK (68 aa)) are Periplasmic-facing. A coiled-coil region spans residues 31–78 (LAQVRDLQKQIADQHGENERLLERNRILEAEVAELKKGTETVEERARH).

The protein belongs to the FtsB family. Part of a complex composed of FtsB, FtsL and FtsQ.

Its subcellular location is the cell inner membrane. In terms of biological role, essential cell division protein. May link together the upstream cell division proteins, which are predominantly cytoplasmic, with the downstream cell division proteins, which are predominantly periplasmic. The chain is Cell division protein FtsB from Pseudomonas aeruginosa (strain ATCC 15692 / DSM 22644 / CIP 104116 / JCM 14847 / LMG 12228 / 1C / PRS 101 / PAO1).